The chain runs to 54 residues: LAAVDCSEYPKPACTLEYRPLCGSDSKTYGNKCNFCNAVVESNGTLTLSHFGKC.

Residues 4–54 (VDCSEYPKPACTLEYRPLCGSDSKTYGNKCNFCNAVVESNGTLTLSHFGKC) enclose the Kazal-like domain. Cystine bridges form between cysteine 6-cysteine 36, cysteine 14-cysteine 33, and cysteine 22-cysteine 54. Asparagine 43 is a glycosylation site (N-linked (GlcNAc...) asparagine).

The protein localises to the secreted. The protein is Ovomucoid of Alectoris chukar (Chukar partridge).